The following is a 194-amino-acid chain: Ribosomal RNA small subunit methyltransferase G (194 aa).

S-adenosyl-L-methionine is bound by residues glycine 70, tyrosine 75, 121-122, and arginine 135; that span reads VE.

The protein belongs to the methyltransferase superfamily. RNA methyltransferase RsmG family.

Its subcellular location is the cytoplasm. It carries out the reaction guanosine(527) in 16S rRNA + S-adenosyl-L-methionine = N(7)-methylguanosine(527) in 16S rRNA + S-adenosyl-L-homocysteine. Its function is as follows. Specifically methylates the N7 position of guanine in position 527 of 16S rRNA. This is Ribosomal RNA small subunit methyltransferase G from Aliarcobacter butzleri (strain RM4018) (Arcobacter butzleri).